A 178-amino-acid polypeptide reads, in one-letter code: Ribosome maturation factor RimP (178 aa).

This sequence belongs to the RimP family.

It localises to the cytoplasm. Functionally, required for maturation of 30S ribosomal subunits. The chain is Ribosome maturation factor RimP from Mycolicibacterium paratuberculosis (strain ATCC BAA-968 / K-10) (Mycobacterium paratuberculosis).